The primary structure comprises 695 residues: MALLLVSLLAFMSLGSGCHHRLCHCSNRVFLCQESKVTEIPSDLPRNAVELRFVLTKLRVIPKGAFSGFGDLEKIEISQNDALEVIEADVFSNLPNLHEIRIEKANNLLYINPEAFQNLPNLRYLLISNTGIRHLPAVHKIQSLQKVLLDIQDNINIHTVERNSFLGLSSESVILRLNKNGIQEIQNCAFNGTQLDDLNLSDNDNLEELPNGVFQGASGPVILDISRTRINSLPSHGLENLKKLRARSTYNLKKLPSLEKFAALVEASLTYPSHCCAFANWRRQISELHPICNKSILRQEVNDITQAGAQRVSLAEDDEFSYSRGFDTMYAEFDYDLCKEVVDVTCSPKPDAFNPCEDIMGYNILRVLIWFISILAITGNVAVLVVLTTSQYKLTVPRFLMCNLAFADLCIGIYLLLIASVDVHTRTLYHNYAIDWQTGAGCADCWLFTVFASELSVYTLTAITLERWHTITHAMQLDCKVQLRHAASIMVIGWIFSSAAALFPIFGVSSYMKVSICLPMDIDSPLSQLYVMFLLVLNVLAFVVICGCYLHIYLTVRNPNIVSSASDTRIAKRMATLIFTDFLCMAPISFFAISASLKVPLITVSKAKILLVLFYPINSCANPFLYAIFTKNFRRDLFILLSKFGCYEMQAQIYRTETSSTAHNSHPRNGHSSSVSRVTNGSSYILAPLNHLAQN.

A signal peptide spans Met-1–Gly-17. Disulfide bonds link Cys-18–Cys-25 and Cys-23–Cys-32. Residues Cys-18–Arg-46 enclose the LRRNT domain. Residues Cys-18–Arg-366 lie on the Extracellular side of the membrane. LRR repeat units lie at residues Val-49–Leu-72, Glu-73–Leu-97, His-98–Asn-118, Leu-119–Ser-143, Leu-144–Ser-169, Ser-170–Gly-192, Thr-193–Gly-216, Ala-217–Asn-240, and Leu-241–Glu-259. Residues Asn-191 and Asn-199 are each glycosylated (N-linked (GlcNAc...) asparagine). Intrachain disulfides connect Cys-275-Cys-346, Cys-276-Cys-292, Cys-276-Cys-356, and Cys-292-Cys-338. An N-linked (GlcNAc...) asparagine glycan is attached at Asn-293. Tyr-335 is modified (sulfotyrosine). The chain crosses the membrane as a helical span at residues Val-367–Leu-387. Residues Thr-388–Arg-398 are Cytoplasmic-facing. The helical transmembrane segment at Phe-399–Val-421 threads the bilayer. Residues Asp-422–Ala-443 lie on the Extracellular side of the membrane. A disulfide bridge connects residues Cys-442 and Cys-517. The chain crosses the membrane as a helical span at residues Asp-444–Leu-465. The Cytoplasmic segment spans residues Glu-466–His-485. The chain crosses the membrane as a helical span at residues Ala-486–Val-508. At Ser-509–Gln-528 the chain is on the extracellular side. Residues Leu-529–Leu-550 form a helical membrane-spanning segment. The Cytoplasmic segment spans residues His-551 to Arg-573. The chain crosses the membrane as a helical span at residues Met-574–Leu-597. The Extracellular portion of the chain corresponds to Lys-598–Lys-608. A helical transmembrane segment spans residues Ile-609–Thr-630. Residues Lys-631 to Asn-695 are Cytoplasmic-facing. A disordered region spans residues Thr-658–Arg-677.

It belongs to the G-protein coupled receptor 1 family. FSH/LSH/TSH subfamily. As to quaternary structure, homotrimer. Functions as a homotrimer binding the FSH hormone heterodimer composed of CGA and FSHB. Interacts with ARRB2. Interacts with APPL2; interaction is independent of follicle stimulating hormone stimulation. In terms of processing, N-glycosylated; indirectly required for FSH-binding, possibly via a conformational change that allows high affinity binding of hormone. Post-translationally, sulfated.

Its subcellular location is the cell membrane. G protein-coupled receptor for follitropin, the follicle-stimulating hormone. Through cAMP production activates the downstream PI3K-AKT and ERK1/ERK2 signaling pathways. The chain is Follicle-stimulating hormone receptor (FSHR) from Cavia porcellus (Guinea pig).